The sequence spans 628 residues: ATP-dependent zinc metalloprotease FtsH (628 aa).

Residues 1 to 7 (MKLSWKT) are Stromal-facing. Residues 8-28 (LLLWSLPIFVVGFFFWQGFLG) traverse the membrane as a helical segment. At 29–118 (PTTTDVGSNI…AHPPKSTSAV (90 aa)) the chain is on the lumenal side. A helical membrane pass occupies residues 119–139 (WGLLGNLLFPLILVGGLAFLF). The Stromal segment spans residues 140–628 (RRSNNASGGP…PEKNYYISQF (489 aa)). 213–220 (GPPGTGKT) contacts ATP. Position 434 (His-434) interacts with Zn(2+). Residue Glu-435 is part of the active site. Residues His-438 and Asp-512 each contribute to the Zn(2+) site.

This sequence in the central section; belongs to the AAA ATPase family. In the C-terminal section; belongs to the peptidase M41 family. As to quaternary structure, homohexamer. Zn(2+) is required as a cofactor.

It is found in the plastid. The protein resides in the chloroplast thylakoid membrane. Acts as a processive, ATP-dependent zinc metallopeptidase. This Porphyra purpurea (Red seaweed) protein is ATP-dependent zinc metalloprotease FtsH.